Reading from the N-terminus, the 1248-residue chain is von Willebrand factor A domain-containing protein 5B2 (1248 aa).

In terms of domain architecture, VIT spans 1–138 (MPGLYCPTSW…TMTVTLCSSR (138 aa)). The disordered stretch occupies residues 184–204 (VGSPEEERPTWEQPTATPDVF). The VWFA domain occupies 354–527 (ELLFLLDGSG…KALEPALSDI (174 aa)). Disordered stretches follow at residues 590-650 (PEEV…SSDT), 672-710 (SASP…QQGC), 751-789 (ALAG…EPGQ), 1008-1037 (SKSA…RLSL), and 1126-1168 (DSAT…SSDL). The segment covering 595–619 (SATSPGTEPTHTTEPLGTGTVSAEL) has biased composition (polar residues). 3 stretches are compositionally biased toward low complexity: residues 684 to 701 (SSES…GSRP), 751 to 764 (ALAG…SGRA), and 780 to 789 (PDGLGPEPGQ). Residues 1127–1145 (SATASCSQSPSSGSEGPGQ) are compositionally biased toward low complexity. The span at 1159 to 1168 (GMERQDSSDL) shows a compositional bias: basic and acidic residues.

The sequence is that of von Willebrand factor A domain-containing protein 5B2 (Vwa5b2) from Mus musculus (Mouse).